The primary structure comprises 960 residues: Glycine dehydrogenase (decarboxylating) (960 aa).

Lys-709 carries the N6-(pyridoxal phosphate)lysine modification.

The protein belongs to the GcvP family. In terms of assembly, the glycine cleavage system is composed of four proteins: P, T, L and H. It depends on pyridoxal 5'-phosphate as a cofactor.

The enzyme catalyses N(6)-[(R)-lipoyl]-L-lysyl-[glycine-cleavage complex H protein] + glycine + H(+) = N(6)-[(R)-S(8)-aminomethyldihydrolipoyl]-L-lysyl-[glycine-cleavage complex H protein] + CO2. The glycine cleavage system catalyzes the degradation of glycine. The P protein binds the alpha-amino group of glycine through its pyridoxal phosphate cofactor; CO(2) is released and the remaining methylamine moiety is then transferred to the lipoamide cofactor of the H protein. This is Glycine dehydrogenase (decarboxylating) from Hahella chejuensis (strain KCTC 2396).